A 98-amino-acid polypeptide reads, in one-letter code: NADH-ubiquinone oxidoreductase chain 4L (98 aa).

The next 3 membrane-spanning stretches (helical) occupy residues 1–21, 28–48, and 59–79; these read MMPINLNLIMAFSLALIGALV, STLLCLEGMMLSLFIQMALLI, and APLILLVFSACEAGLGLALLV.

It belongs to the complex I subunit 4L family. Core subunit of respiratory chain NADH dehydrogenase (Complex I) which is composed of 45 different subunits.

It localises to the mitochondrion inner membrane. The enzyme catalyses a ubiquinone + NADH + 5 H(+)(in) = a ubiquinol + NAD(+) + 4 H(+)(out). In terms of biological role, core subunit of the mitochondrial membrane respiratory chain NADH dehydrogenase (Complex I) which catalyzes electron transfer from NADH through the respiratory chain, using ubiquinone as an electron acceptor. Part of the enzyme membrane arm which is embedded in the lipid bilayer and involved in proton translocation. The sequence is that of NADH-ubiquinone oxidoreductase chain 4L (MT-ND4L) from Distoechurus pennatus (Feather-tailed possum).